The following is a 493-amino-acid chain: tRNA(Ile)-lysidine synthase (493 aa).

26-31 (SGGSDS) contributes to the ATP binding site.

Belongs to the tRNA(Ile)-lysidine synthase family.

Its subcellular location is the cytoplasm. It carries out the reaction cytidine(34) in tRNA(Ile2) + L-lysine + ATP = lysidine(34) in tRNA(Ile2) + AMP + diphosphate + H(+). Functionally, ligates lysine onto the cytidine present at position 34 of the AUA codon-specific tRNA(Ile) that contains the anticodon CAU, in an ATP-dependent manner. Cytidine is converted to lysidine, thus changing the amino acid specificity of the tRNA from methionine to isoleucine. This Bartonella henselae (strain ATCC 49882 / DSM 28221 / CCUG 30454 / Houston 1) (Rochalimaea henselae) protein is tRNA(Ile)-lysidine synthase.